Reading from the N-terminus, the 118-residue chain is Large ribosomal subunit protein bL20 (118 aa).

It belongs to the bacterial ribosomal protein bL20 family.

Binds directly to 23S ribosomal RNA and is necessary for the in vitro assembly process of the 50S ribosomal subunit. It is not involved in the protein synthesizing functions of that subunit. The polypeptide is Large ribosomal subunit protein bL20 (Rhodopirellula baltica (strain DSM 10527 / NCIMB 13988 / SH1)).